A 262-amino-acid polypeptide reads, in one-letter code: tRNA pseudouridine synthase A (262 aa).

Asp51 acts as the Nucleophile in catalysis. Tyr106 is a binding site for substrate.

This sequence belongs to the tRNA pseudouridine synthase TruA family.

It carries out the reaction uridine(38/39/40) in tRNA = pseudouridine(38/39/40) in tRNA. In terms of biological role, formation of pseudouridine at positions 38, 39 and 40 in the anticodon stem and loop of transfer RNAs. This chain is tRNA pseudouridine synthase A, found in Pyrococcus horikoshii (strain ATCC 700860 / DSM 12428 / JCM 9974 / NBRC 100139 / OT-3).